Consider the following 316-residue polypeptide: Cytochrome c biogenesis protein CcsA (316 aa).

7 helical membrane passes run 15–35 (FSIC…TTIL), 44–64 (GIIT…IYSG), 71–91 (LYES…VAYL), 142–162 (MILS…LLVI), 220–240 (VISL…VWAN), 247–267 (WSWD…AIYL), and 281–301 (AIVA…VNLL).

It belongs to the CcmF/CycK/Ccl1/NrfE/CcsA family. May interact with Ccs1.

Its subcellular location is the plastid. The protein localises to the chloroplast thylakoid membrane. Required during biogenesis of c-type cytochromes (cytochrome c6 and cytochrome f) at the step of heme attachment. The polypeptide is Cytochrome c biogenesis protein CcsA (Trachelium caeruleum (Blue throatwort)).